Here is an 877-residue protein sequence, read N- to C-terminus: METKVHLPLAYQQQVFNELIEEDGLCVIAPGLSLLQIAANVLSYFAVPGSLLLLVGANVDDIELIQHEMESHLEKKLITVNTETMSVDKREKSYLEGGIFAITSRILVMDLLTKIIPTEKITGIVLLHADRVVSTGTVAFIMRLYRETNKTGFIKAFSDDPEQFLMGINALSHCLRCLFLRHVFIYPRFHVVVAESLEKSPANVVELNVNLSDSQKTIQSCLLTCIESTMRELRRLNSAYLDMEDWNIESALHRSFDVIVRRQLDSVWHRVSPKTKQLVGDLSTLKFLLSALVCYDCVSFLKLLDTLVLSVNVSSYPSNAQPSPWLMLDAANKMIRVARDRVYKESEGPNMDAIPILEEQPKWSVLQDVLNEVCHETMLADTDAETSNNSIMIMCADERTCLQLRDYLSTVTYDNKDSLKNMNSKLVDYFQWREQYRKMSKSIKKPEPSKEREASNTTSRKGVPPSKRRRVRGGNNATSRTTSDNTDANDSFSRDLRLEKILLSHLSKRYEPEVGNDAFEVIDDFNSIYIYSYNGERDELVLNNLRPRYVIMFDSDPNFIRRVEVYKATYPKRSLRVYFMYYGGSIEEQKYLFSVRREKDSFSRLIKERSNMAIVLTADSERFESQESKFLRNVNTRIAGGGQLSITNEKPRVIVDLREFRSSLPSILHGNNFSVIPCQLLVGDYILSPKICVERKSIRDLIQSLSNGRLYSQCEAMTEYYEIPVLLIEFEQHQSFTSPPFSDLSSEIGKNDVQSKLVLLTLSFPNLRIVWSSSAYVTSIIFQDLKAMEQEPDPASAASIGLEAGQDSTNTYNQAPLDLLMGLPYITMKNYRNVFYGGVKDIQEASETSERKWSELIGPEAGRRLYSFFRKQLKDYE.

Serine 71 carries the phosphoserine; by CK2 modification. Positions 440-490 (SKSIKKPEPSKEREASNTTSRKGVPPSKRRRVRGGNNATSRTTSDNTDAND) are disordered. The segment covering 444 to 454 (KKPEPSKEREA) has biased composition (basic and acidic residues). Polar residues predominate over residues 475–490 (NNATSRTTSDNTDAND). One can recognise an ERCC4 domain in the interval 652 to 732 (RVIVDLREFR…IPVLLIEFEQ (81 aa)).

The protein belongs to the XPF family. In terms of assembly, heterodimer composed of rad16 and swi10.

The protein resides in the nucleus. It is found in the cytoplasm. It localises to the cytoskeleton. Its subcellular location is the microtubule organizing center. The protein localises to the spindle pole body. Functionally, endonuclease that specifically degrades single-stranded DNA and which is involved in nucleotide excision repair of DNA damaged with UV light, bulky adducts, or cross-linking agents. Required for double strand break-induced interchromosomal gene conversion. This is DNA repair protein rad16 (rad16) from Schizosaccharomyces pombe (strain 972 / ATCC 24843) (Fission yeast).